An 815-amino-acid polypeptide reads, in one-letter code: Heme-copper oxidase subunit I+III (815 aa).

The COX1 stretch occupies residues 1–467; that stretch reads MVSRLRGFLA…QLSTLGAFIF (467 aa). Residues 26–46 form a helical membrane-spanning segment; it reads LLYLVTSIAFLLIAGSLALLF. H70 is a Fe(II)-heme a binding site. A run of 18 helical transmembrane segments spans residues 71 to 91, 105 to 125, 157 to 177, 197 to 217, 242 to 262, 281 to 301, 314 to 334, 339 to 359, 380 to 400, 419 to 439, 463 to 483, 580 to 600, 637 to 657, 683 to 703, 708 to 728, 736 to 756, 758 to 778, and 791 to 811; these read GLIM…NYIV, LNAL…ASFF, LAIF…LVTI, ILFT…GGAL, LFWF…LGAM, LTAF…HMFI, ITTI…IFTL, LVYT…IIGG, VVAH…IAGL, IHFA…FALM, GAFI…YSLV, ALFG…VFLL, WVFI…YFFI, LINT…YLGV, YLIT…FLTV, LLIA…YVTT, AHAL…VKLF, and VLAV…VFPL. Cu cation is bound by residues H248, Y252, H297, and H298. Residues 248-252 constitute a cross-link (1'-histidyl-3'-tyrosine (His-Tyr)); sequence HPEVY. Heme a3 is bound at residue H383. H385 is a binding site for Fe(II)-heme a. Positions 545 to 815 are COX3; that stretch reads DVSNVPLSGG…TLVFPLYYLV (271 aa).

This sequence in the N-terminal section; belongs to the heme-copper respiratory oxidase family. The protein in the C-terminal section; belongs to the cytochrome c oxidase subunit 3 family. The cofactor is heme. Cu cation is required as a cofactor.

The protein resides in the cell membrane. The polypeptide is Heme-copper oxidase subunit I+III (aoxB) (Aeropyrum pernix (strain ATCC 700893 / DSM 11879 / JCM 9820 / NBRC 100138 / K1)).